The primary structure comprises 844 residues: DNA mismatch repair protein MutS (844 aa).

610-617 provides a ligand contact to ATP; the sequence is GPNMGGKS.

It belongs to the DNA mismatch repair MutS family.

This protein is involved in the repair of mismatches in DNA. It is possible that it carries out the mismatch recognition step. This protein has a weak ATPase activity. The chain is DNA mismatch repair protein MutS from Francisella tularensis subsp. mediasiatica (strain FSC147).